A 192-amino-acid polypeptide reads, in one-letter code: Thymidine kinase (192 aa).

ATP is bound by residues 9 to 16 (SAMNAGKS) and 87 to 90 (DECQ). The active-site Proton acceptor is E88. 4 residues coordinate Zn(2+): C145, C147, C182, and H185.

Belongs to the thymidine kinase family. In terms of assembly, homotetramer.

The protein localises to the cytoplasm. The enzyme catalyses thymidine + ATP = dTMP + ADP + H(+). The polypeptide is Thymidine kinase (Shewanella oneidensis (strain ATCC 700550 / JCM 31522 / CIP 106686 / LMG 19005 / NCIMB 14063 / MR-1)).